A 397-amino-acid polypeptide reads, in one-letter code: Tryptophan synthase beta chain (397 aa).

An N6-(pyridoxal phosphate)lysine modification is found at Lys-87.

Belongs to the TrpB family. In terms of assembly, tetramer of two alpha and two beta chains. The cofactor is pyridoxal 5'-phosphate.

It catalyses the reaction (1S,2R)-1-C-(indol-3-yl)glycerol 3-phosphate + L-serine = D-glyceraldehyde 3-phosphate + L-tryptophan + H2O. It functions in the pathway amino-acid biosynthesis; L-tryptophan biosynthesis; L-tryptophan from chorismate: step 5/5. In terms of biological role, the beta subunit is responsible for the synthesis of L-tryptophan from indole and L-serine. The sequence is that of Tryptophan synthase beta chain from Escherichia fergusonii (strain ATCC 35469 / DSM 13698 / CCUG 18766 / IAM 14443 / JCM 21226 / LMG 7866 / NBRC 102419 / NCTC 12128 / CDC 0568-73).